Here is a 325-residue protein sequence, read N- to C-terminus: Elongation factor P--(R)-beta-lysine ligase (325 aa).

Residue 76–78 (SPE) coordinates substrate. ATP contacts are provided by residues 100-102 (RNE) and Asn-109. Tyr-118 serves as a coordination point for substrate. 244-245 (EL) is a binding site for ATP. Glu-251 provides a ligand contact to substrate. Gly-300 provides a ligand contact to ATP.

This sequence belongs to the class-II aminoacyl-tRNA synthetase family. EpmA subfamily. As to quaternary structure, homodimer.

It catalyses the reaction D-beta-lysine + L-lysyl-[protein] + ATP = N(6)-((3R)-3,6-diaminohexanoyl)-L-lysyl-[protein] + AMP + diphosphate + H(+). Its function is as follows. With EpmB is involved in the beta-lysylation step of the post-translational modification of translation elongation factor P (EF-P) on 'Lys-34'. Catalyzes the ATP-dependent activation of (R)-beta-lysine produced by EpmB, forming a lysyl-adenylate, from which the beta-lysyl moiety is then transferred to the epsilon-amino group of EF-P 'Lys-34'. The polypeptide is Elongation factor P--(R)-beta-lysine ligase (Salmonella gallinarum (strain 287/91 / NCTC 13346)).